The following is a 275-amino-acid chain: Putative hydroxypyruvate isomerase (275 aa).

Active-site proton donor/acceptor residues include glutamate 147 and glutamate 246.

Belongs to the hyi family.

It carries out the reaction 3-hydroxypyruvate = 2-hydroxy-3-oxopropanoate. In terms of biological role, catalyzes the reversible isomerization between hydroxypyruvate and 2-hydroxy-3-oxopropanoate (also termed tartronate semialdehyde). The protein is Putative hydroxypyruvate isomerase (hyi) of Xenopus laevis (African clawed frog).